The chain runs to 523 residues: MVGQRVLLLVAFLLSGVLLSEAAKILTISTLGGSHYLLLDRVSQILQEHGHNVTMLHQSGKFLIPDIKEEEKSYQVIRWFSPEDHQKRIKKHFDSYIETALDGRKESEALVKLMEIFGTQCSYLLSRKDIMDSLKNENYDLVFVEAFDFCSFLIAEKLVKPFVAILPTTFGSLDFGLPSPLSYVPVFPSLLTDHMDFWGRVKNFLMFFSFSRSQWDMQSTFDNTIKEHFPEGSRPVLSHLLLKAELWFVNSDFAFDFARPLLPNTVYIGGLMEKPIKPVPQDLDNFIANFGDAGFVLVAFGSMLNTHQSQEVLKKMHNAFAHLPQGVIWTCQSSHWPRDVHLATNVKIVDWLPQSDLLAHPSIRLFVTHGGQNSVMEAIRHGVPMVGLPVNGDQHGNMVRVVAKNYGVSIRLNQVTADTLTLTMKQVIEDKRYKSAVVAASVILHSQPLSPAQRLVGWIDHILQTGGATHLKPYAFQQPWHEQYLIDVFVFLLGLTLGTMWLCGKLLGVVARWLRGARKVKKT.

An N-terminal signal peptide occupies residues 1–22; it reads MVGQRVLLLVAFLLSGVLLSEA. The Extracellular segment spans residues 23-483; the sequence is AKILTISTLG…YAFQQPWHEQ (461 aa). Asn-52 carries an N-linked (GlcNAc...) asparagine glycan. A helical transmembrane segment spans residues 484–504; it reads YLIDVFVFLLGLTLGTMWLCG. At 505-523 the chain is on the cytoplasmic side; that stretch reads KLLGVVARWLRGARKVKKT.

The protein belongs to the UDP-glycosyltransferase family.

The protein resides in the membrane. The catalysed reaction is glucuronate acceptor + UDP-alpha-D-glucuronate = acceptor beta-D-glucuronoside + UDP + H(+). Its function is as follows. UDP-glucuronosyltransferases catalyze phase II biotransformation reactions in which lipophilic substrates are conjugated with glucuronic acid to increase water solubility and enhance excretion. They are of major importance in the conjugation and subsequent elimination of potentially toxic xenobiotics and endogenous compounds. In Homo sapiens (Human), this protein is UDP-glucuronosyltransferase 3A1 (UGT3A1).